Reading from the N-terminus, the 919-residue chain is Envelope glycoprotein B (919 aa).

The N-terminal stretch at 1–28 (MSKDSTSLGVRTIVIACLVLLGCCIVEA) is a signal peptide. The Virion surface segment spans residues 29 to 788 (VPTTPSSQPS…SGIASFINNP (760 aa)). 5 disulfides stabilise this stretch: cysteine 81–cysteine 586, cysteine 98–cysteine 542, cysteine 172–cysteine 237, cysteine 330–cysteine 378, and cysteine 607–cysteine 647. Asparagine 106 carries an N-linked (GlcNAc...) asparagine; by host glycan. Positions 138 to 144 (VWKGYSH) are involved in fusion and/or binding to host membrane. Asparagine 216 is a glycosylation site (N-linked (GlcNAc...) asparagine; by host). The interval 223–231 (GWMPWRHYT) is involved in fusion and/or binding to host membrane. Residues asparagine 321, asparagine 364, asparagine 438, asparagine 456, asparagine 493, asparagine 496, and asparagine 499 are each glycosylated (N-linked (GlcNAc...) asparagine; by host). Asparagine 666 and asparagine 688 each carry an N-linked (GlcNAc...) asparagine; by host glycan. 2 hydrophobic membrane proximal region regions span residues 733–786 (IDSV…SFIN) and 765–785 (TLVL…ASFI). The helical transmembrane segment at 789 to 809 (FGGLAIGLLVIAGLVAAFFAY) threads the bilayer. The Intravirion portion of the chain corresponds to 810 to 919 (RYVMQLRSNP…DDPMESEKMV (110 aa)). A Golgi targeting motif is present at residues 864–867 (YMSM). The segment at 900-919 (RGPKYTRLREDDPMESEKMV) is disordered. An Internalization motif motif is present at residues 904-907 (YTRL). Positions 906–919 (RLREDDPMESEKMV) are enriched in basic and acidic residues.

Belongs to the herpesviridae glycoprotein B family. Homotrimer; disulfide-linked. Binds to heparan sulfate proteoglycans. Interacts with gH/gL heterodimer. A proteolytic cleavage by host furin generates two subunits that remain linked by disulfide bonds.

It is found in the virion membrane. It localises to the host cell membrane. The protein localises to the host endosome membrane. Its subcellular location is the host Golgi apparatus membrane. Functionally, envelope glycoprotein that forms spikes at the surface of virion envelope. Essential for the initial attachment to heparan sulfate moieties of the host cell surface proteoglycans. Involved in fusion of viral and cellular membranes leading to virus entry into the host cell. Following initial binding to its host receptors, membrane fusion is mediated by the fusion machinery composed at least of gB and the heterodimer gH/gL. May be involved in the fusion between the virion envelope and the outer nuclear membrane during virion egress. The polypeptide is Envelope glycoprotein B (Equus caballus (Horse)).